A 266-amino-acid chain; its full sequence is Type III pantothenate kinase (266 aa).

6–13 is a binding site for ATP; the sequence is DAGNTNIV. Substrate contacts are provided by residues Tyr-100 and 107–110; that span reads GADR. Asp-109 (proton acceptor) is an active-site residue. Asp-129 serves as a coordination point for K(+). Thr-132 contacts ATP. Thr-184 serves as a coordination point for substrate.

It belongs to the type III pantothenate kinase family. In terms of assembly, homodimer. NH4(+) serves as cofactor. Requires K(+) as cofactor.

It localises to the cytoplasm. It carries out the reaction (R)-pantothenate + ATP = (R)-4'-phosphopantothenate + ADP + H(+). The protein operates within cofactor biosynthesis; coenzyme A biosynthesis; CoA from (R)-pantothenate: step 1/5. Catalyzes the phosphorylation of pantothenate (Pan), the first step in CoA biosynthesis. This Clostridium beijerinckii (strain ATCC 51743 / NCIMB 8052) (Clostridium acetobutylicum) protein is Type III pantothenate kinase.